Reading from the N-terminus, the 819-residue chain is uncharacterized protein (819 aa).

Ser-16 is modified (phosphoserine). Disordered regions lie at residues 28–83 (SNTQ…PPTV) and 96–134 (PTFT…ASKI). The segment at residues 36–63 (KIRFTENENDLSPERAQKEPVSIPHGRY) is a DNA-binding region (zn(2)-C6 fungal-type). Composition is skewed to polar residues over residues 64–77 (TWST…SHLP) and 96–118 (PTFT…NDYI).

It is found in the nucleus. This is an uncharacterized protein from Schizosaccharomyces pombe (strain 972 / ATCC 24843) (Fission yeast).